Here is a 372-residue protein sequence, read N- to C-terminus: Fatty acid 2-hydroxylase (372 aa).

The 79-residue stretch at 8–86 folds into the Cytochrome b5 heme-binding domain; sequence AASFTPAEVQ…LEQYYVGELR (79 aa). Heme contacts are provided by His-43 and His-69. Helical transmembrane passes span 168 to 188 and 213 to 233; these read VWYS…WSYY and SVFI…EYVI. The Fatty acid hydroxylase domain occupies 219–361; sequence FVLGMLFWTF…TKLWDYFFHT (143 aa). Zn(2+) is bound by residues His-234, His-239, His-257, His-260, and His-261. The next 2 membrane-spanning stretches (helical) occupy residues 268–288 and 290–310; these read SRLV…YVFL and LILP…GYVL. 5 residues coordinate Zn(2+): His-315, His-319, His-336, His-339, and His-340.

It belongs to the sterol desaturase family. SCS7 subfamily. It depends on Zn(2+) as a cofactor. Expressed in brain (at protein level). Detected in cerebellum and forebrain. Expression in the white matter is mainly restricted in oligodendrocytes. Expressed in stomach, kidney, skin and testis. Expressed in sebaceous gland.

The protein resides in the endoplasmic reticulum membrane. It localises to the microsome membrane. It carries out the reaction a 1,2-saturated fatty acid + 2 Fe(II)-[cytochrome b5] + O2 + 2 H(+) = a (R)-2-hydroxy fatty acid + 2 Fe(III)-[cytochrome b5] + H2O. It catalyses the reaction hexadecanoate + 2 Fe(II)-[cytochrome b5] + O2 + 2 H(+) = (R)-2-hydroxyhexadecanoate + 2 Fe(III)-[cytochrome b5] + H2O. The catalysed reaction is octadecanoate + 2 Fe(II)-[cytochrome b5] + O2 + 2 H(+) = (R)-2-hydroxyoctadecanoate + 2 Fe(III)-[cytochrome b5] + H2O. The enzyme catalyses docosanoate + 2 Fe(II)-[cytochrome b5] + O2 + 2 H(+) = 2-hydroxydocosanoate + 2 Fe(III)-[cytochrome b5] + H2O. It carries out the reaction tetracosanoate + 2 Fe(II)-[cytochrome b5] + O2 + 2 H(+) = (R)-2-hydroxytetracosanoate + 2 Fe(III)-[cytochrome b5] + H2O. The protein operates within sphingolipid metabolism; galactosylceramide biosynthesis. It participates in lipid metabolism; fatty acid metabolism. Its function is as follows. Catalyzes the hydroxylation of free fatty acids at the C-2 position to produce 2-hydroxy fatty acids, which are building blocks of sphingolipids and glycosphingolipids common in neural tissue and epidermis. FA2H is stereospecific for the production of (R)-2-hydroxy fatty acids. Plays an essential role in the synthesis of galactosphingolipids of the myelin sheath. Responsible for the synthesis of sphingolipids and glycosphingolipids involved in the formation of epidermal lamellar bodies critical for skin permeability barrier. Participates in the synthesis of glycosphingolipids and a fraction of type II wax diesters in sebaceous gland, specifically regulating hair follicle homeostasis. Involved in the synthesis of sphingolipids of plasma membrane rafts, controlling lipid raft mobility and trafficking of raft-associated proteins. In Mus musculus (Mouse), this protein is Fatty acid 2-hydroxylase.